A 238-amino-acid polypeptide reads, in one-letter code: Ribosomal RNA small subunit methyltransferase G (238 aa).

Residues Gly77, Phe82, 128 to 129 (AE), and Arg147 each bind S-adenosyl-L-methionine.

This sequence belongs to the methyltransferase superfamily. RNA methyltransferase RsmG family.

Its subcellular location is the cytoplasm. Its function is as follows. Specifically methylates the N7 position of guanine in position 535 of 16S rRNA. This Listeria innocua serovar 6a (strain ATCC BAA-680 / CLIP 11262) protein is Ribosomal RNA small subunit methyltransferase G.